Consider the following 83-residue polypeptide: Large ribosomal subunit protein bL27 (83 aa).

It belongs to the bacterial ribosomal protein bL27 family.

In Bifidobacterium adolescentis (strain ATCC 15703 / DSM 20083 / NCTC 11814 / E194a), this protein is Large ribosomal subunit protein bL27.